A 100-amino-acid chain; its full sequence is MARKSLIQREKKRQKLEQKYHLIRRSSKKEISKVPSLSEKWKIHGKLESLPRNSAPTRLHRRCFSTGRPRANYRDFGLSGHTLREMVHECLLPGATRSSW.

This sequence belongs to the universal ribosomal protein uS14 family. Part of the 30S ribosomal subunit.

The protein localises to the plastid. It is found in the chloroplast. Functionally, binds 16S rRNA, required for the assembly of 30S particles. This Lotus japonicus (Lotus corniculatus var. japonicus) protein is Small ribosomal subunit protein uS14c.